A 113-amino-acid chain; its full sequence is Large ribosomal subunit protein uL22 (113 aa).

This sequence belongs to the universal ribosomal protein uL22 family. As to quaternary structure, part of the 50S ribosomal subunit.

This protein binds specifically to 23S rRNA; its binding is stimulated by other ribosomal proteins, e.g. L4, L17, and L20. It is important during the early stages of 50S assembly. It makes multiple contacts with different domains of the 23S rRNA in the assembled 50S subunit and ribosome. Its function is as follows. The globular domain of the protein is located near the polypeptide exit tunnel on the outside of the subunit, while an extended beta-hairpin is found that lines the wall of the exit tunnel in the center of the 70S ribosome. This chain is Large ribosomal subunit protein uL22, found in Geobacillus thermodenitrificans (strain NG80-2).